The primary structure comprises 655 residues: Inactive serine protease scarface (655 aa).

The N-terminal stretch at 1-24 (MSASHFREQLALCITLAVLAAASG) is a signal peptide. Composition is skewed to polar residues over residues 213–225 (TQAP…TTAV) and 237–252 (PSTT…QTSR). Residues 213–319 (TQAPFRPQPT…QPSNQKPIYR (107 aa)) form a disordered region. Positions 343–407 (KCASALVCTS…PNYVDPWPVN (65 aa)) are CLIP. 7 disulfide bridges follow: Cys-344-Cys-394, Cys-350-Cys-383, Cys-356-Cys-395, Cys-450-Cys-466, Cys-547-Cys-605, Cys-579-Cys-587, and Cys-595-Cys-623. Positions 421–644 (PTGVKDLDAN…DIKWINTAFA (224 aa)) constitute a Peptidase S1 domain.

Belongs to the peptidase S1 family.

The protein localises to the secreted. In terms of biological role, inactive serine protease that plays a role in germ-band retraction and dorsal closure morphogenesis in embryogenesis; contributes to amnioserosa attachment and epithelial apico-basal polarity by regulating the localization of laminin LanA on the apical side of the amnioserosa epithelium. Contributes to epithelial morphogenesis probably by regulating the bsk/JNK pathway, as part of a negative-feedback loop, and by modulating the cross-talk between the Egfr, bsk/JNK and dpp signal transduction pathways. In larval development, antagonizes the morphogenetic movements controlled by the bsk/JNK signaling including male genitalia formation and thorax development. The polypeptide is Inactive serine protease scarface (Drosophila melanogaster (Fruit fly)).